The primary structure comprises 461 residues: Argininosuccinate lyase (461 aa).

Belongs to the lyase 1 family. Argininosuccinate lyase subfamily. In terms of assembly, homotetramer.

The protein localises to the cytoplasm. It carries out the reaction 2-(N(omega)-L-arginino)succinate = fumarate + L-arginine. The protein operates within amino-acid biosynthesis; L-arginine biosynthesis; L-arginine from L-ornithine and carbamoyl phosphate: step 3/3. The chain is Argininosuccinate lyase from Nostoc punctiforme (strain ATCC 29133 / PCC 73102).